The following is a 147-amino-acid chain: Large ribosomal subunit protein uL11 (147 aa).

It belongs to the universal ribosomal protein uL11 family. As to quaternary structure, part of the ribosomal stalk of the 50S ribosomal subunit. Interacts with L10 and the large rRNA to form the base of the stalk. L10 forms an elongated spine to which L12 dimers bind in a sequential fashion forming a multimeric L10(L12)X complex. In terms of processing, one or more lysine residues are methylated.

Functionally, forms part of the ribosomal stalk which helps the ribosome interact with GTP-bound translation factors. The protein is Large ribosomal subunit protein uL11 of Bacteroides fragilis (strain ATCC 25285 / DSM 2151 / CCUG 4856 / JCM 11019 / LMG 10263 / NCTC 9343 / Onslow / VPI 2553 / EN-2).